The following is a 419-amino-acid chain: Transcription regulator lscL (419 aa).

Residues 12–35 (RIRKVKCDEKKPCCQKCIDTGRTC) constitute a DNA-binding region (zn(2)-C6 fungal-type).

It localises to the nucleus. Functionally, transcription factor that may coregulate the expression of the gene cluster that mediates the biosynthesis of the lipopeptide antibiotics leucinostatins that show extensive biological activities, including antimalarial, antiviral, antibacterial, antifungal, and antitumor activities, as well as phytotoxic. The protein is Transcription regulator lscL of Purpureocillium lilacinum (Paecilomyces lilacinus).